The following is a 600-amino-acid chain: DNA repair and recombination protein mus-11 (600 aa).

Residues 148–152 (KRALR) mediate DNA binding. Over residues 268–319 (LNPQAQQSRPLSRSGSTGSLNTRQQPQNSHQFTARAQSRPPQQQLNSNQSRP) the composition is skewed to polar residues. 2 disordered regions span residues 268 to 357 (LNPQ…AGAA) and 387 to 600 (APKP…QRLA). Composition is skewed to low complexity over residues 325 to 343 (NNSSNANTPNNPQNYTTPQ) and 458 to 470 (ARSASGSFSRAGP). Residues 502–512 (GFSSSPSTNRG) are compositionally biased toward polar residues. Low complexity-rich tracts occupy residues 540-564 (SATTTTIAANTTAGSATGGNAAPSA) and 577-591 (ANASNATAAGAATSG).

The protein belongs to the RAD52 family. As to quaternary structure, part of a complex that includes mei-3/rad51 and mus-11/rad52.

It localises to the nucleus. Functionally, involved in DNA double-strand break (DSB) repair and recombination. Promotes the annealing of complementary single-stranded DNA and by stimulation of the mei-3/rad51 recombinase. The sequence is that of DNA repair and recombination protein mus-11 (mus-11) from Neurospora crassa (strain ATCC 24698 / 74-OR23-1A / CBS 708.71 / DSM 1257 / FGSC 987).